The chain runs to 234 residues: NAD-dependent protein deacetylase (234 aa).

Residues 1 to 234 enclose the Deacetylase sirtuin-type domain; sequence MSDITAAQTT…AVDFFEGVQV (234 aa). 11 residues coordinate NAD(+): Ala-23, Thr-27, Arg-35, Gln-99, Ile-101, Asp-102, His-117, Thr-184, Ser-185, Asn-208, and Val-226. Nicotinamide is bound by residues Ile-101 and Asp-102. Catalysis depends on His-117, which acts as the Proton acceptor.

Belongs to the sirtuin family. Class U subfamily.

Its subcellular location is the cytoplasm. The enzyme catalyses N(6)-acetyl-L-lysyl-[protein] + NAD(+) + H2O = 2''-O-acetyl-ADP-D-ribose + nicotinamide + L-lysyl-[protein]. Its function is as follows. NAD-dependent protein deacetylase which modulates the activities of several enzymes which are inactive in their acetylated form. This is NAD-dependent protein deacetylase from Lactiplantibacillus plantarum (strain ATCC BAA-793 / NCIMB 8826 / WCFS1) (Lactobacillus plantarum).